The following is a 378-amino-acid chain: Histidinol-phosphate aminotransferase 2 (378 aa).

An N6-(pyridoxal phosphate)lysine modification is found at lysine 240.

The protein belongs to the class-II pyridoxal-phosphate-dependent aminotransferase family. Histidinol-phosphate aminotransferase subfamily. In terms of assembly, homodimer. It depends on pyridoxal 5'-phosphate as a cofactor.

It catalyses the reaction L-histidinol phosphate + 2-oxoglutarate = 3-(imidazol-4-yl)-2-oxopropyl phosphate + L-glutamate. It functions in the pathway amino-acid biosynthesis; L-histidine biosynthesis; L-histidine from 5-phospho-alpha-D-ribose 1-diphosphate: step 7/9. The chain is Histidinol-phosphate aminotransferase 2 (hisC2) from Caulobacter vibrioides (strain ATCC 19089 / CIP 103742 / CB 15) (Caulobacter crescentus).